A 363-amino-acid chain; its full sequence is 1-aminocyclopropane-1-carboxylate oxidase homolog (363 aa).

The 101-residue stretch at 212–312 (FHLFCSCNYY…MSITCFFGES (101 aa)) folds into the Fe2OG dioxygenase domain. Fe cation contacts are provided by histidine 236, aspartate 238, and histidine 292.

The protein belongs to the iron/ascorbate-dependent oxidoreductase family.

This is 1-aminocyclopropane-1-carboxylate oxidase homolog (ACO3) from Solanum lycopersicum (Tomato).